Consider the following 249-residue polypeptide: Phosphate import ATP-binding protein PstB (249 aa).

In terms of domain architecture, ABC transporter spans 5 to 244 (LRIEDLHFWY…PEKDRTEAYV (240 aa)). Residue 37 to 44 (GPSGCGKS) participates in ATP binding.

It belongs to the ABC transporter superfamily. Phosphate importer (TC 3.A.1.7) family. The complex is composed of two ATP-binding proteins (PstB), two transmembrane proteins (PstC and PstA) and a solute-binding protein (PstS).

The protein resides in the cell inner membrane. The catalysed reaction is phosphate(out) + ATP + H2O = ADP + 2 phosphate(in) + H(+). Its function is as follows. Part of the ABC transporter complex PstSACB involved in phosphate import. Responsible for energy coupling to the transport system. This Salinibacter ruber (strain DSM 13855 / M31) protein is Phosphate import ATP-binding protein PstB.